A 109-amino-acid chain; its full sequence is Small ribosomal subunit protein uS17 (109 aa).

The protein belongs to the universal ribosomal protein uS17 family. Part of the 30S ribosomal subunit.

Its function is as follows. One of the primary rRNA binding proteins, it binds specifically to the 5'-end of 16S ribosomal RNA. In Halobacterium salinarum (strain ATCC 29341 / DSM 671 / R1), this protein is Small ribosomal subunit protein uS17.